The chain runs to 334 residues: N-acetyl-gamma-glutamyl-phosphate reductase (334 aa).

The active site involves Cys-154.

The protein belongs to the NAGSA dehydrogenase family. Type 1 subfamily.

It localises to the cytoplasm. The catalysed reaction is N-acetyl-L-glutamate 5-semialdehyde + phosphate + NADP(+) = N-acetyl-L-glutamyl 5-phosphate + NADPH + H(+). Its pathway is amino-acid biosynthesis; L-arginine biosynthesis; N(2)-acetyl-L-ornithine from L-glutamate: step 3/4. Its function is as follows. Catalyzes the NADPH-dependent reduction of N-acetyl-5-glutamyl phosphate to yield N-acetyl-L-glutamate 5-semialdehyde. This is N-acetyl-gamma-glutamyl-phosphate reductase from Buchnera aphidicola subsp. Acyrthosiphon pisum (strain 5A).